Reading from the N-terminus, the 115-residue chain is Large ribosomal subunit protein bL19 (115 aa).

Belongs to the bacterial ribosomal protein bL19 family.

Its function is as follows. This protein is located at the 30S-50S ribosomal subunit interface and may play a role in the structure and function of the aminoacyl-tRNA binding site. The polypeptide is Large ribosomal subunit protein bL19 (Thermosipho africanus (strain TCF52B)).